A 994-amino-acid chain; its full sequence is E3 ubiquitin-protein ligase Arkadia (994 aa).

Glycyl lysine isopeptide (Lys-Gly) (interchain with G-Cter in SUMO2) cross-links involve residues lysine 19, lysine 28, lysine 34, lysine 47, lysine 59, lysine 73, lysine 87, lysine 96, and lysine 110. Residues 66–89 (HLCDDSQKQEKEMNGNQQEQEKSL) show a composition bias toward basic and acidic residues. The disordered stretch occupies residues 66–106 (HLCDDSQKQEKEMNGNQQEQEKSLVVRKKRKSQQAGPSYVQ). The disordered stretch occupies residues 120-191 (QHLGTPSDED…HKWPRTETES (72 aa)). Positions 132–151 (SSFSDCLSSPSSSLHFGDSD) are enriched in low complexity. The segment covering 164–173 (RHSQTILNAK) has biased composition (polar residues). Residue lysine 173 forms a Glycyl lysine isopeptide (Lys-Gly) (interchain with G-Cter in SUMO2) linkage. The span at 174–184 (SRSHSARSHKW) shows a compositional bias: basic residues. Residues lysine 198 and lysine 218 each participate in a glycyl lysine isopeptide (Lys-Gly) (interchain with G-Cter in SUMO2) cross-link. The segment at 212–277 (CRKRFVKNNS…SSSTEGEEDL (66 aa)) is disordered. Residues 234-247 (MQRKKREVLARRKY) are compositionally biased toward basic residues. Residues 241–404 (VLARRKYALL…VPTTSARMES (164 aa)) are interaction with AXIN1. The span at 252–271 (SSSSSSENDLSSESSSSSST) shows a compositional bias: low complexity. An SUMO interaction motif 1 (SIM) motif is present at residues 300–304 (VVVIE). The SUMO interaction motif 2 (SIM) signature appears at 325–331 (EVEIVTV). The disordered stretch occupies residues 337 to 371 (SRSTLGHSRSHWSQGSSSHASRPQEPRNRSRISTV). Low complexity predominate over residues 347 to 357 (HWSQGSSSHAS). Positions 382–386 (VVDLT) match the SUMO interaction motif 3 (SIM) motif. Disordered stretches follow at residues 388-476 (DEDE…AMPR), 508-537 (HGHH…DPAC), 610-684 (APSQ…VDYV), and 696-742 (ISSH…APPA). Polar residues predominate over residues 395 to 467 (VPTTSARMES…SRRTTSSAVT (73 aa)). Residues 508–522 (HGHHFQHHHHHHHTP) are compositionally biased toward basic residues. Residues 670 to 680 (NPPPQTQPPPQ) show a composition bias toward pro residues. The interval 907 to 909 (YPH) is ubiquitin binding. Residues lysine 923 and lysine 927 each participate in a glycyl lysine isopeptide (Lys-Gly) (interchain with G-Cter in SUMO2) cross-link. Cysteine 942 and cysteine 945 together coordinate Zn(2+). The segment at 942–983 (CTICLSILEEGEDVRRLPCMHLFHQVCVDQWLITNKKCPICR) adopts an RING-type; atypical zinc-finger fold. The tract at residues 957-961 (RLPCM) is ubiquitin binding. Histidine 965 and cysteine 968 together coordinate Zn(2+).

The protein belongs to the Arkadia family. As to quaternary structure, monomer. Interacts with SMAD6, SMAD7, AXIN1, AXIN2 and SKIL isoform SNON. Interacts with (phosphorylated) SMAD2 and SMAD3. Part of a complex containing RNF111, AXIN1 and SMAD7. Interacts (via SIM domains) with SUMO1 and SUMO2. In terms of tissue distribution, broadly expressed.

Its subcellular location is the nucleus. It localises to the cytoplasm. The protein resides in the PML body. The catalysed reaction is S-ubiquitinyl-[E2 ubiquitin-conjugating enzyme]-L-cysteine + [acceptor protein]-L-lysine = [E2 ubiquitin-conjugating enzyme]-L-cysteine + N(6)-ubiquitinyl-[acceptor protein]-L-lysine.. Its pathway is protein modification; protein ubiquitination. Its activity is regulated as follows. Binds free ubiquitin non-covalently via its RING-type zinc finger. Ubiquitin-binding leads to enhance the E3 ubiquitin-protein ligase activity by stabilizing the ubiquitin-conjugating enzyme E2 (donor ubiquitin) in the 'closed' conformation and activating ubiquitin transfer. Functionally, E3 ubiquitin-protein ligase. Required for mesoderm patterning during embryonic development. Acts as an enhancer of the transcriptional responses of the SMAD2/SMAD3 effectors, which are activated downstream of BMP. Acts by mediating ubiquitination and degradation of SMAD inhibitors such as SMAD7, inducing their proteasomal degradation and thereby enhancing the transcriptional activity of TGF-beta and BMP. In addition to enhance transcription of SMAD2/SMAD3 effectors, also regulates their turnover by mediating their ubiquitination and subsequent degradation, coupling their activation with degradation, thereby ensuring that only effectors 'in use' are degraded. Activates SMAD3/SMAD4-dependent transcription by triggering signal-induced degradation of SNON isoform of SKIL. Associates with UBE2D2 as an E2 enzyme. Specifically binds polysumoylated chains via SUMO interaction motifs (SIMs) and mediates ubiquitination of sumoylated substrates. Catalyzes 'Lys-63'-linked ubiquitination of sumoylated XPC in response to UV irradiation, promoting nucleotide excision repair. Mediates ubiquitination and degradation of sumoylated PML. The regulation of the BMP-SMAD signaling is however independent of sumoylation and is not dependent of SUMO interaction motifs (SIMs). This is E3 ubiquitin-protein ligase Arkadia from Homo sapiens (Human).